Consider the following 90-residue polypeptide: U7-theraphotoxin-Hhn1a 5 (90 aa).

The signal sequence occupies residues 1-19 (MKTAIFTVVLALAVFAVLS). The propeptide occupies 20–50 (FGWEANEKALSEESTELIHEKEAASETEARE). 3 disulfide bridges follow: cysteine 51–cysteine 65, cysteine 58–cysteine 70, and cysteine 64–cysteine 81.

It belongs to the neurotoxin 10 (Hwtx-1) family. 13 (Hntx-13) subfamily. Expressed by the venom gland.

It is found in the secreted. Ion channel inhibitor. The protein is U7-theraphotoxin-Hhn1a 5 of Cyriopagopus hainanus (Chinese bird spider).